The primary structure comprises 224 residues: UPF0758 protein VP0184 (224 aa).

The 123-residue stretch at 102–224 folds into the MPN domain; sequence ALTSPEQTKL…SVSFAERGWI (123 aa). Zn(2+) contacts are provided by H173, H175, and D186. The JAMM motif signature appears at 173–186; that stretch reads HNHPSGVAEPSQAD.

Belongs to the UPF0758 family.

The chain is UPF0758 protein VP0184 from Vibrio parahaemolyticus serotype O3:K6 (strain RIMD 2210633).